We begin with the raw amino-acid sequence, 581 residues long: MSGAELISDLRARFGQAVLSEQSTNDAFPTLWIAPDAAPAVHRYLKHDVAKPFALLADLWAIDETARKHREGQPPSGITIASHLISLGRNADIVLKCPLDAKAPRATSIASVYPNADWYEREAFDLFGVHFDGRHDHRRILLPPLWEGHPLRKDQPARATEKPPFVMTAARFDAEEKALMIDPEALGLPTERDGVELMILNYGPHSMATHGVFRVVLALDGEEIVAARPDIGFHHRGAEKMGERQSWHQFIPYTDRIDYLGGVISEMPYLQAVERLCGITVPDRAKTIRIMLSEIYRIMNHLLLYGTMAQDCGAMSPVFYMFTDRERGYRIIEAITGARMHPGWFRIGGVAADLPEGWDRLVREFLDWMPKRLDDYAGMVLGNEIFRGRTVGIAAYDTATALDWGITGPGLRATGCDWDLRKARPYGGYENFEFEVPTGNNGDCYDRVLVRVEEMRQSLRIIRQCLDHMPSGPIKADHPLTTPPPRERMLHDIDTLIHHFVGVSWGPVVPAGEATGQAETVRGLTQYALVSDGATCSYRTRIRTPSFAHLQAVSAIAPGLTVADLVAYLGSIDYVMSDVDR.

Residues 1 to 172 are NADH dehydrogenase I subunit C; that stretch reads MSGAELISDL…PPFVMTAARF (172 aa). The segment at 196–581 is NADH dehydrogenase I subunit D; that stretch reads ELMILNYGPH…IDYVMSDVDR (386 aa).

The protein in the N-terminal section; belongs to the complex I 30 kDa subunit family. In the C-terminal section; belongs to the complex I 49 kDa subunit family. As to quaternary structure, NDH-1 is composed of 13 different subunits. Subunits NuoB, CD, E, F, and G constitute the peripheral sector of the complex.

Its subcellular location is the cell inner membrane. The enzyme catalyses a quinone + NADH + 5 H(+)(in) = a quinol + NAD(+) + 4 H(+)(out). NDH-1 shuttles electrons from NADH, via FMN and iron-sulfur (Fe-S) centers, to quinones in the respiratory chain. The immediate electron acceptor for the enzyme in this species is believed to be ubiquinone. Couples the redox reaction to proton translocation (for every two electrons transferred, four hydrogen ions are translocated across the cytoplasmic membrane), and thus conserves the redox energy in a proton gradient. In Rhodopseudomonas palustris (strain BisA53), this protein is NADH-quinone oxidoreductase subunit C/D.